Reading from the N-terminus, the 244-residue chain is N-(5'-phosphoribosyl)anthranilate isomerase 3, chloroplastic (244 aa).

The N-terminal 32 residues, 1-32 (MSTGISSDLHLHPRALNFSKTSKSGLSNRKVS), are a transit peptide targeting the chloroplast.

This sequence belongs to the TrpF family.

It localises to the plastid. The protein resides in the chloroplast. It carries out the reaction N-(5-phospho-beta-D-ribosyl)anthranilate = 1-(2-carboxyphenylamino)-1-deoxy-D-ribulose 5-phosphate. The protein operates within amino-acid biosynthesis; L-tryptophan biosynthesis; L-tryptophan from chorismate: step 3/5. This is N-(5'-phosphoribosyl)anthranilate isomerase 3, chloroplastic (PAI3) from Arabidopsis thaliana (Mouse-ear cress).